A 302-amino-acid chain; its full sequence is Putative fructose-bisphosphate aldolase (302 aa).

Catalysis depends on aspartate 86, which acts as the Proton donor. Residues histidine 87, aspartate 116, glutamate 146, and histidine 192 each coordinate Zn(2+). Glycine 193 contacts dihydroxyacetone phosphate. Histidine 223 serves as a coordination point for Zn(2+). Dihydroxyacetone phosphate is bound by residues 224-226 (GAD) and 245-248 (NVNR).

It belongs to the class II fructose-bisphosphate aldolase family. Homodimer. The cofactor is Zn(2+).

It catalyses the reaction beta-D-fructose 1,6-bisphosphate = D-glyceraldehyde 3-phosphate + dihydroxyacetone phosphate. It functions in the pathway carbohydrate degradation; glycolysis; D-glyceraldehyde 3-phosphate and glycerone phosphate from D-glucose: step 4/4. Catalyzes the aldol condensation of dihydroxyacetone phosphate (DHAP or glycerone-phosphate) with glyceraldehyde 3-phosphate (G3P) to form fructose 1,6-bisphosphate (FBP) in gluconeogenesis and the reverse reaction in glycolysis. The polypeptide is Putative fructose-bisphosphate aldolase (Coccidioides immitis (strain RS) (Valley fever fungus)).